Here is a 302-residue protein sequence, read N- to C-terminus: Phytoene synthase (302 aa).

This sequence belongs to the phytoene/squalene synthase family. Requires ATP as cofactor. It depends on Mn(2+) as a cofactor. The cofactor is Mg(2+).

Its pathway is carotenoid biosynthesis; phytoene biosynthesis. In terms of biological role, involved in the biosynthesis of carotenoids. Catalyzes the condensation of two molecules of geranylgeranyl diphosphate (GGPP) to give prephytoene diphosphate (PPPP) and the subsequent rearrangement of the cyclopropylcarbinyl intermediate to yield phytoene. This Mycobacterium bovis (strain ATCC BAA-935 / AF2122/97) protein is Phytoene synthase (crtB).